The following is a 159-amino-acid chain: Ankyrin repeat domain-containing protein 37 (159 aa).

ANK repeat units lie at residues 1–25 (MLLL…SVNA), 30–59 (QEQS…DLNQ), and 63–92 (LGET…QIGV). The short motif at 130-150 (EQQERDPRAPVLRQKRSFRTV) is the Nuclear localization signal element.

In terms of processing, ubiquitinated by the CRL2(FEM1B) complex, leading to its degradation. As to expression, expressed testis, ovary, uterus, kidney, liver, but not in other tissues.

It localises to the nucleus. The protein resides in the cytoplasm. In Mus musculus (Mouse), this protein is Ankyrin repeat domain-containing protein 37.